A 325-amino-acid chain; its full sequence is tRNA dimethylallyltransferase (325 aa).

12 to 19 (GPTASGKT) contacts ATP. Residue 14–19 (TASGKT) coordinates substrate. Interaction with substrate tRNA regions lie at residues 37 to 40 (DSAL), 161 to 165 (QRIHR), and 244 to 249 (RCVGYR).

Belongs to the IPP transferase family. As to quaternary structure, monomer. Mg(2+) is required as a cofactor.

The catalysed reaction is adenosine(37) in tRNA + dimethylallyl diphosphate = N(6)-dimethylallyladenosine(37) in tRNA + diphosphate. Functionally, catalyzes the transfer of a dimethylallyl group onto the adenine at position 37 in tRNAs that read codons beginning with uridine, leading to the formation of N6-(dimethylallyl)adenosine (i(6)A). The protein is tRNA dimethylallyltransferase of Chromobacterium violaceum (strain ATCC 12472 / DSM 30191 / JCM 1249 / CCUG 213 / NBRC 12614 / NCIMB 9131 / NCTC 9757 / MK).